A 232-amino-acid chain; its full sequence is Peptidyl-prolyl cis-trans isomerase CYP26-1 (232 aa).

The region spanning 7-166 (FFDLTVDGKP…KPVVIADCGE (160 aa)) is the PPIase cyclophilin-type domain. A glycan (N-linked (GlcNAc...) asparagine) is linked at N108. The chain crosses the membrane as a helical span at residues 212-232 (YYLINIVVACMVLMCFWSWFV).

It belongs to the cyclophilin-type PPIase family. In terms of tissue distribution, expressed only in flowers.

Its subcellular location is the membrane. The enzyme catalyses [protein]-peptidylproline (omega=180) = [protein]-peptidylproline (omega=0). Its function is as follows. PPIases accelerate the folding of proteins. It catalyzes the cis-trans isomerization of proline imidic peptide bonds in oligopeptides. The protein is Peptidyl-prolyl cis-trans isomerase CYP26-1 (CYP26-1) of Arabidopsis thaliana (Mouse-ear cress).